Reading from the N-terminus, the 399-residue chain is uncharacterized protein (399 aa).

Positions 254–335 (SRVSTGDTSP…FFRDSDDDGD (82 aa)) are disordered. The segment covering 255–264 (RVSTGDTSPY) has biased composition (polar residues). Positions 310 to 329 (RNAEMKKSHSANDSEEFFRD) are enriched in basic and acidic residues.

This is an uncharacterized protein from Xenopus laevis (African clawed frog).